A 366-amino-acid chain; its full sequence is Transcription initiation factor IIA subunit 1 (366 aa).

Disordered stretches follow at residues 56-82 (LSPD…AANA), 133-162 (EVNS…SSGQ), and 257-317 (QLDG…DSAE). The segment covering 146–162 (SAASMMQKQQQAASSGQ) has biased composition (low complexity). Residues 264 to 317 (SSDEDESEESDDNIDNDDDDDLDKDDDEDAEHEDAAEEEPLNSEDDVTDEDSAE) are compositionally biased toward acidic residues. Residues Ser265 and Ser306 each carry the phosphoserine; by TAF1 modification.

The protein belongs to the TFIIA subunit 1 family. Belongs to the TFIID complex which is composed of TATA binding protein (Tbp) and a number of TBP-associated factors (Tafs). TFIIA is a heterodimer of a unprocessed large subunit 1 and a small subunit gamma. It was originally believed to be a heterotrimer of an alpha (p30), a beta (p20) and a gamma subunit (p14). Interacts with Tbp. Taf4 interacts with TFIIA-L when TFIIA-L is in complex with Tbp. The precursor form (48 kDa) is cleaved to give rise to the alpha (30 kDa) and beta (20 kDa) subunits.

The protein localises to the nucleus. TFIIA is a component of the transcription machinery of RNA polymerase II and plays an important role in transcriptional activation. TFIIA in a complex with TBP mediates transcriptional activity. The protein is Transcription initiation factor IIA subunit 1 (TfIIA-L) of Drosophila melanogaster (Fruit fly).